A 413-amino-acid polypeptide reads, in one-letter code: MRISPRLFLSKAERFVPKSGVYPQGFAVGGIHCGIKKPDVLDLAMLQNTSGKDAVAAAVFTQNKFKAAPVQVSAEILEKSGGAINSLIVNSGNANAVTGTKGLEDARSMVAATDEAAKNTKTASLVMSTGVIGNRLPIGNILSGIPVLGQQLGSTHAHWLQCAQAICTTDSFPKMVSKQFSLNGNTYALAGVAKGAGMICPNMATLLGFFATDAPVSRSALQSILAFAVDRSFNSISVDGDMSTNDTIVAIANGAAGGPLIENEDTPAFAALRGEITAFAQQLASLVVRDGEGATKFITIRVVNAKSYADAKCVASTVANSSLFKTAMFGNDANWGRILCAIGYAPVSGSSVDTTRTSVSFVPSEGEPLRLLVNGEPETVDENRALEILQKRGFGGGNRFGHRRKPRGHISDV.

The substrate site is built by threonine 168, lysine 194, threonine 205, and glutamate 292. The active-site Nucleophile is threonine 205.

The protein belongs to the ArgJ family. As to quaternary structure, heterodimer of an alpha and a beta chain. In terms of processing, the alpha and beta chains are autoproteolytically processed from a single precursor protein within the mitochondrion.

The protein resides in the mitochondrion matrix. The enzyme catalyses N(2)-acetyl-L-ornithine + L-glutamate = N-acetyl-L-glutamate + L-ornithine. The catalysed reaction is L-glutamate + acetyl-CoA = N-acetyl-L-glutamate + CoA + H(+). It participates in amino-acid biosynthesis; L-arginine biosynthesis; L-ornithine and N-acetyl-L-glutamate from L-glutamate and N(2)-acetyl-L-ornithine (cyclic): step 1/1. It functions in the pathway amino-acid biosynthesis; L-arginine biosynthesis; N(2)-acetyl-L-ornithine from L-glutamate: step 1/4. Its function is as follows. Catalyzes two activities which are involved in the cyclic version of arginine biosynthesis: the synthesis of acetylglutamate from glutamate and acetyl-CoA, and of ornithine by transacetylation between acetylornithine and glutamate. The sequence is that of Arginine biosynthesis bifunctional protein ArgJ, mitochondrial from Clavispora lusitaniae (strain ATCC 42720) (Yeast).